Consider the following 263-residue polypeptide: Hydroxyethylthiazole kinase 1 (263 aa).

Met42 serves as a coordination point for substrate. The ATP site is built by Lys118 and Thr164. Gly191 is a binding site for substrate.

Belongs to the Thz kinase family. The cofactor is Mg(2+).

The catalysed reaction is 5-(2-hydroxyethyl)-4-methylthiazole + ATP = 4-methyl-5-(2-phosphooxyethyl)-thiazole + ADP + H(+). Its pathway is cofactor biosynthesis; thiamine diphosphate biosynthesis; 4-methyl-5-(2-phosphoethyl)-thiazole from 5-(2-hydroxyethyl)-4-methylthiazole: step 1/1. Its function is as follows. Catalyzes the phosphorylation of the hydroxyl group of 4-methyl-5-beta-hydroxyethylthiazole (THZ). The sequence is that of Hydroxyethylthiazole kinase 1 from Clostridium botulinum (strain Langeland / NCTC 10281 / Type F).